We begin with the raw amino-acid sequence, 198 residues long: Putative pseudouridine methyltransferase (198 aa).

L132 and C186 together coordinate S-adenosyl-L-methionine.

It belongs to the methyltransferase superfamily. TrmY family.

The protein resides in the cytoplasm. This is Putative pseudouridine methyltransferase from Vibrio vulnificus (strain CMCP6).